A 211-amino-acid polypeptide reads, in one-letter code: BAG family molecular chaperone regulator 2 (211 aa).

A2 carries the N-acetylalanine modification. A phosphoserine mark is found at S20, S31, and S73. Residues 20 to 61 (SMADRSSRLLESLDQLELRVEALREAATAVEQEKEILLEMIH) adopt a coiled-coil conformation. The region spanning 109 to 189 (SLKHATRIID…NIENSDKAIK (81 aa)) is the BAG domain.

In terms of assembly, binds to the ATPase domain of HSP/HSC70 chaperones. May interact with NWD1. Interacts with HSPA1A (via NBD), HSPA1B (via NBD) and HSPA8. May interact with DNJC9; the interaction seems to be histone-dependent.

In terms of biological role, co-chaperone for HSP70 and HSC70 chaperone proteins. Acts as a nucleotide-exchange factor (NEF) promoting the release of ADP from the HSP70 and HSC70 proteins thereby triggering client/substrate protein release. The sequence is that of BAG family molecular chaperone regulator 2 (BAG2) from Homo sapiens (Human).